The primary structure comprises 241 residues: MORN repeat-containing protein 3 (241 aa).

Positions 6–35 (CPQKSEPLWKEWDQKAQKNGLRHQVFAVNG) are interaction with MDM2. 7 MORN repeats span residues 38–60 (YVGE…KNGA), 62–84 (YEGD…DQET), 91–113 (YSGW…PKEY), 114–136 (YEGD…NGDI), 137–159 (YEGQ…NGNR), 160–182 (YEGN…DHGQ), and 184–205 (FEGF…GRDE). An interaction with SIRT1 region spans residues 76 to 100 (TLSLPDQETGKYKRAYSGWWKGDKK). Positions 206–240 (APQPTQFPIPEVKILDPDGVLEEALAMFKKTKEEG) are interaction with TP53.

In terms of assembly, interacts with MEIG1. Interacts with TP53, MDM2 and SIRT1; the interactions mediate post-transcriptional modifications of TP53 by MDM2 and SIRT1.

The protein resides in the cytoplasmic vesicle. The protein localises to the secretory vesicle. Its subcellular location is the acrosome. Its function is as follows. Assembles a suppression complex (suppresome) by tethering SIRT1 and MDM2 to regulate composite modifications of p53/TP53. Confers both deacetylation-mediated functional inactivation, by SIRT1, and ubiquitination-dependent degradation, by MDM2, of p53/TP53, promoting a proliferative and cell survival behaviors. May play a role in the regulation of spermatogenesis. The sequence is that of MORN repeat-containing protein 3 (MORN3) from Bos taurus (Bovine).